The sequence spans 86 residues: Large ribosomal subunit protein bL31B (86 aa).

It belongs to the bacterial ribosomal protein bL31 family. Type B subfamily. In terms of assembly, part of the 50S ribosomal subunit.

In Vibrio campbellii (strain ATCC BAA-1116), this protein is Large ribosomal subunit protein bL31B.